A 79-amino-acid polypeptide reads, in one-letter code: Quinohemoprotein amine dehydrogenase subunit gamma (79 aa).

Residues 7-16 constitute a cross-link (4-cysteinyl-glutamic acid (Cys-Glu)); it reads CTATTDPGWE. Cross-links (3-cysteinyl-aspartic acid (Cys-Asp)) lie at residues 27–33 and 41–49; these read CQPMEAD and CWWPAQVPD. Catalysis depends on D33, which acts as the Proton acceptor. The 4'-cysteinyl-tryptophylquinone (Cys-Trp) cross-link spans 37-43; that stretch reads CSDPCWW. Residue W43 is modified to Tryptophylquinone.

Belongs to the quinohemoprotein amine dehydrogenase subunit gamma family. Heterotrimer of an alpha, a beta and a gamma subunit. Cysteine tryptophylquinone residue is required as a cofactor. In terms of processing, the cysteine tryptophylquinone (CTQ) is generated by oxidation of the indole ring of a tryptophan residue to form tryptophylquinone, followed by covalent cross-linking with a cysteine residue.

It localises to the periplasm. The catalysed reaction is an aliphatic amine + A + H2O = an aldehyde + AH2 + NH4(+). Its function is as follows. Catalyzes the oxidative deamination of a wide range of aliphatic monoamines and diamines. The physiological electron acceptor is an azurin-like blue protein. This is Quinohemoprotein amine dehydrogenase subunit gamma (qhnDH) from Pseudomonas putida (strain ATCC 47054 / DSM 6125 / CFBP 8728 / NCIMB 11950 / KT2440).